The following is a 97-amino-acid chain: Large ribosomal subunit protein bL28 (97 aa).

The protein belongs to the bacterial ribosomal protein bL28 family.

This Rickettsia prowazekii (strain Madrid E) protein is Large ribosomal subunit protein bL28.